We begin with the raw amino-acid sequence, 471 residues long: 5-hydroxytryptamine receptor 2A (471 aa).

Over 1–80 (MEILCEDNTS…LQEKNWSALL (80 aa)) the chain is Extracellular. 5 N-linked (GlcNAc...) asparagine glycosylation sites follow: asparagine 8, asparagine 38, asparagine 44, asparagine 51, and asparagine 54. The helical transmembrane segment at 81-97 (TAVVIILTIAGNILVIM) threads the bilayer. Residues 98 to 111 (AVSLEKKLQNATNY) are Cytoplasmic-facing. A helical membrane pass occupies residues 112-137 (FLMSLAIADMLLGFLVMPVSMLTILY). Topologically, residues 138 to 146 (GYRWPLPSK) are extracellular. The chain crosses the membrane as a helical span at residues 147–171 (LCAVWIYLDVLFSTASIMHLCAISL). A disulfide bridge connects residues cysteine 148 and cysteine 227. Aspartate 155 contributes to the serotonin binding site. The short motif at 172-174 (DRY) is the DRY motif; important for ligand-induced conformation changes element. The Cytoplasmic segment spans residues 172–191 (DRYVAIQNPIHHSRFNSRTK). The helical transmembrane segment at 192 to 215 (AFLKIIAVWTISVGVSMPIPVFGL) threads the bilayer. Topologically, residues 216–232 (QDDSKVFKQGSCLLADD) are extracellular. The helical transmembrane segment at 233–258 (NFVLIGSFVAFFIPLTIMVITYFLTI) threads the bilayer. Residues 259-322 (KSLQKEATLC…QSISNEQKAC (64 aa)) lie on the Cytoplasmic side of the membrane. Serine 280 is modified (phosphoserine). The helical transmembrane segment at 323–348 (KVLGIVFFLFVVMWCPFFITNIMAVI) threads the bilayer. Asparagine 343 lines the serotonin pocket. A disulfide bridge connects residues cysteine 349 and cysteine 353. Residues 349 to 356 (CKESCNEH) are Extracellular-facing. A helical transmembrane segment spans residues 357–382 (VIGALLNVFVWIGYLSSAVNPLVYTL). The short motif at 376–380 (NPLVY) is the NPxxY motif; important for ligand-induced conformation changes and signaling element. Residues 383-471 (FNKTYRSAFS…NTVNEKVSCV (89 aa)) are Cytoplasmic-facing. A PDZ-binding motif is present at residues 469–471 (SCV).

The protein belongs to the G-protein coupled receptor 1 family. Interacts (via C-terminus) with MPDZ and PATJ. May interact (via C-terminus) with MPP3, PRDX6, DLG4, DLG1, CASK, APBA1 and MAGI2. Interacts with GRM2 and DRD2; this may affect signaling.

The protein localises to the cell membrane. The protein resides in the cell projection. Its subcellular location is the dendrite. It is found in the axon. It localises to the cytoplasmic vesicle. The protein localises to the membrane. The protein resides in the caveola. Its subcellular location is the presynapse. G-protein coupled receptor activity is regulated by lipids: oleamide increases HTR2A-mediated activity. In terms of biological role, G-protein coupled receptor for 5-hydroxytryptamine (serotonin). Also functions as a receptor for various drugs and psychoactive substances, including mescaline, psilocybin, 1-(2,5-dimethoxy-4-iodophenyl)-2-aminopropane (DOI) and lysergic acid diethylamide (LSD). Ligand binding causes a conformation change that triggers signaling via guanine nucleotide-binding proteins (G proteins) and modulates the activity of downstream effectors. HTR2A is coupled to G(q)/G(11) G alpha proteins and activates phospholipase C-beta, releasing diacylglycerol (DAG) and inositol 1,4,5-trisphosphate (IP3) second messengers that modulate the activity of phosphatidylinositol 3-kinase and promote the release of Ca(2+) ions from intracellular stores, respectively. Beta-arrestin family members inhibit signaling via G proteins and mediate activation of alternative signaling pathways. Affects neural activity, perception, cognition and mood. Plays a role in the regulation of behavior, including responses to anxiogenic situations and psychoactive substances. Plays a role in intestinal smooth muscle contraction, and may play a role in arterial vasoconstriction. The chain is 5-hydroxytryptamine receptor 2A (HTR2A) from Cricetulus griseus (Chinese hamster).